The primary structure comprises 466 residues: FAD-dependent monooxygenase dpfgE (466 aa).

Positions 1–23 are cleaved as a signal peptide; it reads MSQKPFRVIIVGGSVTGLTLAHS. Positions 35, 49, and 108 each coordinate FAD. N-linked (GlcNAc...) asparagine glycosylation is found at N128 and N192. FAD is bound by residues D312 and A325. The N-linked (GlcNAc...) asparagine glycan is linked to N376. A helical membrane pass occupies residues 443-465; that stretch reads GVVRNVFFLLAATVIVAWVCRLW.

Belongs to the paxM FAD-dependent monooxygenase family. FAD is required as a cofactor.

It localises to the membrane. It functions in the pathway secondary metabolite biosynthesis; terpenoid biosynthesis. Functionally, FAD-dependent monooxygenase; part of the gene cluster that mediates the biosynthesis of diterpenoid pyrones. The first step of the pathway is the synthesis of the alpha-pyrone moiety by the polyketide synthase dpfgA via condensation of one acetyl-CoA starter unit with 3 malonyl-CoA units and 2 methylations. The alpha-pyrone is then combined with geranylgeranyl pyrophosphate (GGPP) formed by the GGPP synthase dpfgD through the action of the prenyltransferase dpfgC to yield a linear alpha-pyrone diterpenoid. Subsequent steps in the diterpenoid pyrone biosynthetic pathway involve the decalin core formation, which is initiated by the epoxidation of the C10-C11 olefin by the FAD-dependent oxidoreductase dpfgE, and is followed by a cyclization cascade catalyzed by the terpene cyclase dpfgB. The short chain dehydrogenase/reductase dpfgG then oxidizes the 8S hydroxy group to a ketone and the short chain dehydrogenase/reductase dpfgH reduces the ketone to the 8R hydroxy group to yield higginsianin B. Higginsianin B is further methylated by the methyltransferase dpfgI to produce the intermediate named FDDP B. The cytochrome P450 monooxygenase dfgpJ then catalyzes a three-step oxidation at C-27 to generate a carboxylic acid as well as C-26 hydroxylation. Finally, methyltransferase dpfgK methylates the carboxylic acid generated by dpfgJ, yielding the final diterpenoid pyrones from the pathway which were named FDDP D and FDDP E. In Gibberella zeae (strain ATCC MYA-4620 / CBS 123657 / FGSC 9075 / NRRL 31084 / PH-1) (Wheat head blight fungus), this protein is FAD-dependent monooxygenase dpfgE.